The sequence spans 621 residues: Lethal(3)malignant brain tumor-like protein 4 (621 aa).

The interval 1-48 (MRQPNRKRKLSLESTERMNQDRCTGQTEEEKKPGEVTTPSKRESSVTT) is disordered. Basic and acidic residues-rich tracts occupy residues 10–20 (LSLESTERMNQ) and 28–44 (EEEK…KRES). MBT repeat units follow at residues 52 to 152 (WSWE…LHIP), 160 to 260 (FVWM…LVAP), and 269 to 364 (FSWT…LEVP). Residues 370–414 (VKILPGQPACPTPGCRGIGHIRGPRYAGHHSAFGCPYSDVNLKRE) form a CCHHC-type zinc finger. Positions 379, 384, 398, and 404 each coordinate Zn(2+). Residues 543–607 (WTVDEVAEFV…YNSILMFRNS (65 aa)) enclose the SAM domain.

The protein localises to the nucleus. Putative Polycomb group (PcG) protein. PcG proteins maintain the transcriptionally repressive state of genes, probably via a modification of chromatin, rendering it heritably changed in its expressibility. The polypeptide is Lethal(3)malignant brain tumor-like protein 4 (L3mbtl4) (Mus musculus (Mouse)).